Reading from the N-terminus, the 111-residue chain is Disintegrin DS-AS (111 aa).

The signal sequence occupies residues 1–20 (MIQVLLVIICLAVFPYQGSC). Positions 21–47 (IILESGNVNDYEIVYPKKLIVLPTGAM) are excised as a propeptide. Residues 47-111 (MNSPHPCCDP…PDCPRNPYKD (65 aa)) form the Disintegrin domain. Cystine bridges form between cysteine 53/cysteine 76, cysteine 67/cysteine 73, cysteine 72/cysteine 97, and cysteine 85/cysteine 104. Residues 89–91 (RGD) carry the Cell attachment site motif.

In terms of assembly, heterodimer; disulfide-linked.

It localises to the secreted. Functionally, inhibits ADP-induced platelet aggregation in human platelet-rich plasma (IC(50) is 8 uM). The sequence is that of Disintegrin DS-AS from Atheris squamigera (Variable bush viper).